The primary structure comprises 200 residues: Potassium-transporting ATPase KdpC subunit (200 aa).

The helical transmembrane segment at 13 to 33 (ITLIFWLITAIIYPLAILVVG) threads the bilayer.

The protein belongs to the KdpC family. In terms of assembly, the system is composed of three essential subunits: KdpA, KdpB and KdpC.

The protein localises to the cell membrane. Its function is as follows. Part of the high-affinity ATP-driven potassium transport (or Kdp) system, which catalyzes the hydrolysis of ATP coupled with the electrogenic transport of potassium into the cytoplasm. This subunit acts as a catalytic chaperone that increases the ATP-binding affinity of the ATP-hydrolyzing subunit KdpB by the formation of a transient KdpB/KdpC/ATP ternary complex. The sequence is that of Potassium-transporting ATPase KdpC subunit from Anabaena sp. (strain L31).